The chain runs to 265 residues: Orotidine 5'-phosphate decarboxylase (265 aa).

Residues aspartate 37, 59–61, 91–100, tyrosine 217, and arginine 235 each bind substrate; these read KTH and DRKFADIGNT. Residue lysine 93 is the Proton donor of the active site.

Belongs to the OMP decarboxylase family.

The catalysed reaction is orotidine 5'-phosphate + H(+) = UMP + CO2. The protein operates within pyrimidine metabolism; UMP biosynthesis via de novo pathway; UMP from orotate: step 2/2. This Diutina rugosa (Yeast) protein is Orotidine 5'-phosphate decarboxylase (URA3).